The sequence spans 670 residues: Lebercilin-like protein (670 aa).

A disordered region spans residues 24–44 (RRSAECKRSPGTGDFSRNSNA). 2 coiled-coil regions span residues 148–259 (LHKI…EREE) and 305–336 (AAQT…IKNI). Residues 351–402 (YPKVSSTKSVQADRKSLPFTSMRHQGTQKSDVAPLTTKGKKATGNMDRKEKS) form a disordered region. Polar residues predominate over residues 368–380 (PFTSMRHQGTQKS). Positions 420–440 (EDSKTKYEDLSREEKHLEVQV) form a coiled coil. Disordered stretches follow at residues 495 to 520 (RSMQ…PLRQ), 533 to 594 (LHHG…FRDK), and 606 to 647 (GYVL…AFGD). Polar residues predominate over residues 546 to 558 (AGNTKYSHSTSKH). 3 stretches are compositionally biased toward basic and acidic residues: residues 560–572 (SNRE…HSDS), 585–594 (KAKDTTFRDK), and 621–632 (GSEEPLQSKESH). Over residues 637–647 (SQASASNAFGD) the composition is skewed to polar residues.

Belongs to the LCA5 family.

This is Lebercilin-like protein from Papio anubis (Olive baboon).